The primary structure comprises 258 residues: Imidazole glycerol phosphate synthase subunit HisF (258 aa).

Active-site residues include Asp-11 and Asp-130.

This sequence belongs to the HisA/HisF family. As to quaternary structure, heterodimer of HisH and HisF.

It localises to the cytoplasm. The enzyme catalyses 5-[(5-phospho-1-deoxy-D-ribulos-1-ylimino)methylamino]-1-(5-phospho-beta-D-ribosyl)imidazole-4-carboxamide + L-glutamine = D-erythro-1-(imidazol-4-yl)glycerol 3-phosphate + 5-amino-1-(5-phospho-beta-D-ribosyl)imidazole-4-carboxamide + L-glutamate + H(+). It participates in amino-acid biosynthesis; L-histidine biosynthesis; L-histidine from 5-phospho-alpha-D-ribose 1-diphosphate: step 5/9. In terms of biological role, IGPS catalyzes the conversion of PRFAR and glutamine to IGP, AICAR and glutamate. The HisF subunit catalyzes the cyclization activity that produces IGP and AICAR from PRFAR using the ammonia provided by the HisH subunit. This is Imidazole glycerol phosphate synthase subunit HisF from Haemophilus influenzae (strain 86-028NP).